The following is a 249-amino-acid chain: Tumor necrosis factor receptor superfamily member 13B (249 aa).

Over 1-128 (MAMAFCPKDQ…LSSDQLTLYC (128 aa)) the chain is Extracellular. TNFR-Cys repeat units follow at residues 5–38 (FCPK…TDFC) and 42–76 (NCRK…AHFC). 6 disulfides stabilise this stretch: cysteine 6–cysteine 19, cysteine 22–cysteine 34, cysteine 26–cysteine 38, cysteine 43–cysteine 58, cysteine 61–cysteine 72, and cysteine 65–cysteine 76. The tract at residues 86–116 (LQPELGRPQAGEVEVRSDNSGRHQGSEHGPG) is disordered. The span at 98–111 (VEVRSDNSGRHQGS) shows a compositional bias: basic and acidic residues. A helical; Signal-anchor for type III membrane protein transmembrane segment spans residues 129–149 (TLGVCLCAIFCCFLVALASFL). The Cytoplasmic segment spans residues 150–249 (RRRGEPLPSQ…ASTGDARPAT (100 aa)). Positions 156–176 (LPSQPAGPRGSQANSPHAHRP) are disordered.

In terms of assembly, binds TRAF2, TRAF5 and TRAF6. Binds the NH2-terminal domain of CAMLG with its C-terminus.

Its subcellular location is the membrane. Functionally, receptor for TNFSF13/APRIL and TNFSF13B/TALL1/BAFF/BLYS that binds both ligands with similar high affinity. Mediates calcineurin-dependent activation of NF-AT, as well as activation of NF-kappa-B and AP-1. Involved in the stimulation of B- and T-cell function and the regulation of humoral immunity. This is Tumor necrosis factor receptor superfamily member 13B (Tnfrsf13b) from Mus musculus (Mouse).